Here is a 293-residue protein sequence, read N- to C-terminus: Ribosomal protein L11 methyltransferase (293 aa).

Residues Thr-145, Gly-166, Asp-188, and Asn-230 each contribute to the S-adenosyl-L-methionine site.

Belongs to the methyltransferase superfamily. PrmA family.

Its subcellular location is the cytoplasm. It catalyses the reaction L-lysyl-[protein] + 3 S-adenosyl-L-methionine = N(6),N(6),N(6)-trimethyl-L-lysyl-[protein] + 3 S-adenosyl-L-homocysteine + 3 H(+). Its function is as follows. Methylates ribosomal protein L11. The sequence is that of Ribosomal protein L11 methyltransferase from Klebsiella pneumoniae subsp. pneumoniae (strain ATCC 700721 / MGH 78578).